Reading from the N-terminus, the 110-residue chain is NADH-quinone oxidoreductase subunit K (110 aa).

3 helical membrane-spanning segments follow: residues 13-33, 38-58, and 70-90; these read VTHGLIFSTLLFVISVAGIII, ILILLMSIELMLLAVNTNFLI, and VFVFFIMAVAAAETAIGLAIV.

It belongs to the complex I subunit 4L family. NDH-1 is composed of 14 different subunits. Subunits NuoA, H, J, K, L, M, N constitute the membrane sector of the complex.

It is found in the cell inner membrane. It catalyses the reaction a quinone + NADH + 5 H(+)(in) = a quinol + NAD(+) + 4 H(+)(out). Functionally, NDH-1 shuttles electrons from NADH, via FMN and iron-sulfur (Fe-S) centers, to quinones in the respiratory chain. The immediate electron acceptor for the enzyme in this species is believed to be ubiquinone. Couples the redox reaction to proton translocation (for every two electrons transferred, four hydrogen ions are translocated across the cytoplasmic membrane), and thus conserves the redox energy in a proton gradient. This chain is NADH-quinone oxidoreductase subunit K, found in Francisella tularensis subsp. tularensis (strain FSC 198).